The primary structure comprises 213 residues: Large ribosomal subunit protein uL3 (213 aa).

At Gln151 the chain carries N5-methylglutamine.

It belongs to the universal ribosomal protein uL3 family. Part of the 50S ribosomal subunit. Forms a cluster with proteins L14 and L19. In terms of processing, methylated by PrmB.

One of the primary rRNA binding proteins, it binds directly near the 3'-end of the 23S rRNA, where it nucleates assembly of the 50S subunit. The sequence is that of Large ribosomal subunit protein uL3 from Rhizobium johnstonii (strain DSM 114642 / LMG 32736 / 3841) (Rhizobium leguminosarum bv. viciae).